We begin with the raw amino-acid sequence, 454 residues long: Epoxide hydrolase 1 (454 aa).

Residues 1-21 (MWLEILLASVLGFVIYWFVSK) traverse the membrane as a helical segment. At 22 to 454 (DKEETLLLGD…RKFMGLLEQQ (433 aa)) the chain is on the cytoplasmic side. Residue aspartate 226 is the Nucleophile of the active site. At arginine 294 the chain carries Dimethylated arginine. Tyrosine 373 functions as the Proton donor in the catalytic mechanism. The active-site Proton acceptor is the histidine 430.

This sequence belongs to the peptidase S33 family.

The protein localises to the microsome membrane. It is found in the endoplasmic reticulum membrane. The catalysed reaction is cis-stilbene oxide + H2O = (1R,2R)-hydrobenzoin. It carries out the reaction 1-(4-methoxyphenyl)-N-methyl-N-[(3-methyloxetan-3-yl)methyl]methanamine + H2O = 2-{[(4-methoxybenzyl)(methyl)amino]methyl}-2-methylpropane-1,3-diol. It catalyses the reaction 8,9-epoxy-(5Z,11Z,14Z)-eicosatrienoate + H2O = 8,9-dihydroxy-(5Z,11Z,14Z)-eicosatrienoate. The enzyme catalyses 11,12-epoxy-(5Z,8Z,14Z)-eicosatrienoate + H2O = 11,12-dihydroxy-(5Z,8Z,14Z)-eicosatrienoate. The catalysed reaction is 2-(5Z,8Z,11Z,14Z-eicosatetraenoyl)-glycerol + H2O = glycerol + (5Z,8Z,11Z,14Z)-eicosatetraenoate + H(+). Inhibited by 10-hydroxystearamide and methoxy-arachidonyl fluorophosphate. Functionally, biotransformation enzyme that catalyzes the hydrolysis of arene and aliphatic epoxides to less reactive and more water soluble dihydrodiols by the trans addition of water. May play a role in the metabolism of endogenous lipids such as epoxide-containing fatty acids. Metabolizes the abundant endocannabinoid 2-arachidonoylglycerol (2-AG) to free arachidonic acid (AA) and glycerol. Binds 20(S)-hydroxycholesterol (20(S)-OHC). This Sus scrofa (Pig) protein is Epoxide hydrolase 1 (EPHX1).